The primary structure comprises 451 residues: Phosphoglucosamine mutase (451 aa).

Residue Ser102 is the Phosphoserine intermediate of the active site. 4 residues coordinate Mg(2+): Ser102, Asp242, Asp244, and Asp246. Phosphoserine is present on Ser102.

It belongs to the phosphohexose mutase family. Requires Mg(2+) as cofactor. Activated by phosphorylation.

The enzyme catalyses alpha-D-glucosamine 1-phosphate = D-glucosamine 6-phosphate. In terms of biological role, catalyzes the conversion of glucosamine-6-phosphate to glucosamine-1-phosphate. The protein is Phosphoglucosamine mutase of Staphylococcus aureus (strain Mu3 / ATCC 700698).